A 527-amino-acid polypeptide reads, in one-letter code: Glutamate--cysteine ligase (527 aa).

Belongs to the glutamate--cysteine ligase type 1 family. Type 1 subfamily.

It carries out the reaction L-cysteine + L-glutamate + ATP = gamma-L-glutamyl-L-cysteine + ADP + phosphate + H(+). It functions in the pathway sulfur metabolism; glutathione biosynthesis; glutathione from L-cysteine and L-glutamate: step 1/2. In Bordetella petrii (strain ATCC BAA-461 / DSM 12804 / CCUG 43448), this protein is Glutamate--cysteine ligase.